We begin with the raw amino-acid sequence, 215 residues long: 7-methyl-GTP pyrophosphatase (215 aa).

D79 serves as the catalytic Proton acceptor.

This sequence belongs to the Maf family. YceF subfamily. It depends on a divalent metal cation as a cofactor.

Its subcellular location is the cytoplasm. It catalyses the reaction N(7)-methyl-GTP + H2O = N(7)-methyl-GMP + diphosphate + H(+). Its function is as follows. Nucleoside triphosphate pyrophosphatase that hydrolyzes 7-methyl-GTP (m(7)GTP). May have a dual role in cell division arrest and in preventing the incorporation of modified nucleotides into cellular nucleic acids. This is 7-methyl-GTP pyrophosphatase from Burkholderia thailandensis (strain ATCC 700388 / DSM 13276 / CCUG 48851 / CIP 106301 / E264).